The following is a 223-amino-acid chain: DNA mismatch repair protein MutH (223 aa).

The protein belongs to the MutH family.

It is found in the cytoplasm. Sequence-specific endonuclease that cleaves unmethylated GATC sequences. It is involved in DNA mismatch repair. This is DNA mismatch repair protein MutH from Shewanella sp. (strain ANA-3).